The following is a 394-amino-acid chain: Chaperone protein DnaJ (394 aa).

A J domain is found at 4–68 (DYYEILGVSR…ELKARYDRFG (65 aa)). A CR-type zinc finger spans residues 136 to 218 (GGEKQIRISH…CNGEGLAQTT (83 aa)). Zn(2+)-binding residues include Cys149, Cys152, Cys166, Cys169, Cys192, Cys195, Cys206, and Cys209. CXXCXGXG motif repeat units follow at residues 149 to 156 (CNVCGGSG), 166 to 173 (CPTCGGSG), 192 to 199 (CPTCGGSG), and 206 to 213 (CYNCNGEG).

The protein belongs to the DnaJ family. In terms of assembly, homodimer. It depends on Zn(2+) as a cofactor.

It localises to the cytoplasm. Functionally, participates actively in the response to hyperosmotic and heat shock by preventing the aggregation of stress-denatured proteins and by disaggregating proteins, also in an autonomous, DnaK-independent fashion. Unfolded proteins bind initially to DnaJ; upon interaction with the DnaJ-bound protein, DnaK hydrolyzes its bound ATP, resulting in the formation of a stable complex. GrpE releases ADP from DnaK; ATP binding to DnaK triggers the release of the substrate protein, thus completing the reaction cycle. Several rounds of ATP-dependent interactions between DnaJ, DnaK and GrpE are required for fully efficient folding. Also involved, together with DnaK and GrpE, in the DNA replication of plasmids through activation of initiation proteins. The sequence is that of Chaperone protein DnaJ from Synechococcus sp. (strain JA-2-3B'a(2-13)) (Cyanobacteria bacterium Yellowstone B-Prime).